The primary structure comprises 834 residues: Protein Jade-1 (834 aa).

A disordered region spans residues 1 to 46 (MKRGRLPSSSEDSDDNGSLSTTWSQHSRSQHGRSSTCSRPEDRKPS). Positions 24–35 (SQHSRSQHGRSS) are enriched in low complexity. The interaction with KAT7/HBO1 and histones stretch occupies residues 61–81 (DSYQLNPDDYYVLADPWRQEW). The segment at 81-189 (WEKGVQVPVS…EQRCYDNMNH (109 aa)) is interaction with histones. Residue serine 90 is modified to Phosphoserine. Threonine 93 bears the Phosphothreonine mark. Residue lysine 115 forms a Glycyl lysine isopeptide (Lys-Gly) (interchain with G-Cter in SUMO2) linkage. The PHD-type 1 zinc finger occupies 204 to 254 (DVVCDVCQSPDGEDGNEMVFCDKCNICVHQACYGILKVPEGSWLCRTCALG). The C2HC pre-PHD-type zinc finger occupies 256 to 290 (QPKCLLCPKKGGAMKPTRSGTKWVHVSCALWIPEV). A PHD-type 2 zinc finger spans residues 314–370 (LVCSLCNEKFGASIQCSVKNCRTAFHVTCAFDRGLEMKTILAENDEVKFKSYCPKHS). A disordered region spans residues 367–409 (PKHSSHRKPEEGLGEGAAQENGAPESSPQSPLEPYGSLEPNRE). A Glycyl lysine isopeptide (Lys-Gly) (interchain with G-Cter in SUMO2) cross-link involves residue lysine 573. 2 disordered regions span residues 589–621 (HPLK…CGRR) and 676–716 (DKSF…GTRK). Residue serine 603 is modified to Phosphoserine. Lysine 609 carries the N6-acetyllysine modification. 2 positions are modified to phosphoserine: serine 704 and serine 735. The disordered stretch occupies residues 738 to 819 (KSWGGFRIPK…EKKCIHASST (82 aa)). Basic and acidic residues-rich tracts occupy residues 747–768 (KKGE…HSDC) and 777–790 (PAKE…RADS).

Belongs to the JADE family. Component of the HBO1 complex composed at least of ING4 or ING5, KAT7/HBO1, MEAF6, and one of JADE1, JADE2 and JADE3. Interacts with NPHP4. In terms of tissue distribution, highly expressed in kidney. Also present in liver (at protein level).

It localises to the nucleus. The protein resides in the chromosome. The protein localises to the cytoplasm. It is found in the cytoskeleton. Its subcellular location is the cilium basal body. Functionally, scaffold subunit of some HBO1 complexes, which have a histone H4 acetyltransferase activity. Plays a key role in HBO1 complex by directing KAT7/HBO1 specificity towards histone H4 acetylation (H4K5ac, H4K8ac and H4K12ac), regulating DNA replication initiation, regulating DNA replication initiation. May also promote acetylation of nucleosomal histone H4 by KAT5. Promotes apoptosis. May act as a renal tumor suppressor. Negatively regulates canonical Wnt signaling; at least in part, cooperates with NPHP4 in this function. This Mus musculus (Mouse) protein is Protein Jade-1 (Jade1).